Reading from the N-terminus, the 785-residue chain is Mitochondrial intermediate peptidase (785 aa).

Residues 1–27 constitute a mitochondrion transit peptide; that stretch reads MLKAVMPRPWVCSRCVKRQIQSSRGLA. The interval 26 to 52 is disordered; sequence LATASTQYREPRPVPTDHSAPGAKHDD. H566 serves as a coordination point for Zn(2+). E567 is a catalytic residue. H570 and H573 together coordinate Zn(2+).

It belongs to the peptidase M3 family. The cofactor is Zn(2+).

It localises to the mitochondrion matrix. The enzyme catalyses Release of an N-terminal octapeptide as second stage of processing of some proteins imported into the mitochondrion.. In terms of biological role, cleaves proteins, imported into the mitochondrion, to their mature size. While most mitochondrial precursor proteins are processed to the mature form in one step by mitochondrial processing peptidase (MPP), the sequential cleavage by MIP of an octapeptide after initial processing by MPP is a required step for a subgroup of nuclear-encoded precursor proteins destined for the matrix or the inner membrane. This Sclerotinia sclerotiorum (strain ATCC 18683 / 1980 / Ss-1) (White mold) protein is Mitochondrial intermediate peptidase (oct1).